Reading from the N-terminus, the 67-residue chain is Large ribosomal subunit protein bL35 (67 aa).

It belongs to the bacterial ribosomal protein bL35 family.

This is Large ribosomal subunit protein bL35 from Synechocystis sp. (strain ATCC 27184 / PCC 6803 / Kazusa).